The chain runs to 193 residues: Ribonuclease HII (193 aa).

The RNase H type-2 domain occupies 15–193 (CIVAGIDEAG…PYHRRSFRCC (179 aa)). Residues aspartate 21, glutamate 22, and aspartate 112 each contribute to the a divalent metal cation site.

This sequence belongs to the RNase HII family. Mn(2+) is required as a cofactor. The cofactor is Mg(2+).

Its subcellular location is the cytoplasm. The enzyme catalyses Endonucleolytic cleavage to 5'-phosphomonoester.. Its function is as follows. Endonuclease that specifically degrades the RNA of RNA-DNA hybrids. In Rickettsia rickettsii (strain Iowa), this protein is Ribonuclease HII.